The chain runs to 214 residues: Protein PAM68, chloroplastic (214 aa).

Disordered stretches follow at residues 1–26 (MASVPCSFKLSAHRRSSSKLDGNNKQ) and 62–111 (ATMN…ERGV). A chloroplast-targeting transit peptide spans 1–35 (MASVPCSFKLSAHRRSSSKLDGNNKQCSSLVERLR). At 36–124 (DKTKSQVPKS…IVTNRMISRM (89 aa)) the chain is on the stromal side. Residues 75–84 (KKTKKSKKPK) show a composition bias toward basic residues. Residues 89 to 106 (SDEDDDDEDEDDDDEEDE) are compositionally biased toward acidic residues. The chain crosses the membrane as a helical span at residues 125–145 (GFTVGLPLFIGLLFFPFFYYL). Residues 146–152 (KVGLKVD) are Lumenal, thylakoid-facing. A helical membrane pass occupies residues 153–173 (VPTWVPFIVSFVFFGTALAGV). The Stromal segment spans residues 174 to 214 (SYGIVSSSWDPLREGSLLGWNEAKKNWPVFWQSFWNSSDKR).

In terms of assembly, interacts with the PSII subunits psbA, psbB, psbC, psbD, psbH and psbI, but not with psbE, psbF or psbO. Interacts with the PSII assembly factors HCF136, LPA1, LPA2 and ALB3.

The protein resides in the plastid. Its subcellular location is the chloroplast thylakoid membrane. Its function is as follows. Involved in early steps in photosystem II (PSII) biogenesis and in maturation and stability of newly synthesized psbA protein. This chain is Protein PAM68, chloroplastic (PAM68), found in Arabidopsis thaliana (Mouse-ear cress).